The sequence spans 708 residues: Capsid scaffolding protein (708 aa).

Active-site charge relay system residues include histidine 63, serine 132, and histidine 157. Disordered regions lie at residues 270–339, 455–565, and 593–620; these read SAER…MSHP, HPSY…QQQR, and ALPS…GGGE. Low complexity predominate over residues 284–293; that stretch reads PAAGARVPSS. The span at 294–311 shows a compositional bias: pro residues; it reads SPSPPVEPPSPVQPPALP. The span at 326–339 shows a compositional bias: low complexity; the sequence is SPSEPAEAASMSHP. The interaction with pAP stretch occupies residues 333 to 352; it reads AASMSHPLSAAVPAATAPPG. Residues 498-513 are compositionally biased toward basic residues; the sequence is KQHRHGGSGGHNKRRK. 2 short sequence motifs (nuclear localization signal) span residues 510 to 515 and 537 to 543; these read KRRKET and RARKRLK. A compositionally biased stretch (low complexity) spans 593–615; sequence ALPSAASSSPTTTTVCTPTSELT. The segment at 688-708 is interaction with major capsid protein; the sequence is PPKDMVDLNRRIFVAALNKLE.

This sequence belongs to the herpesviridae capsid scaffolding protein family. As to quaternary structure, homomultimer. Interacts with major capsid protein. Exists in a monomer-dimer equilibrium with the dimer being the active species. Capsid scaffolding protein is cleaved by assemblin after formation of the spherical procapsid. As a result, the capsid obtains its mature, icosahedral shape. Cleavages occur at two or more sites: release (R-site) and maturation (M-site).

It localises to the host cytoplasm. The protein localises to the host nucleus. The enzyme catalyses Cleaves -Ala-|-Ser- and -Ala-|-Ala- bonds in the scaffold protein.. Its function is as follows. Acts as a scaffold protein by binding major capsid protein in the cytoplasm, inducing the nuclear localization of both proteins. Multimerizes in the nucleus such as major capsid protein forms the icosahedral T=16 capsid. Autocatalytic cleavage releases the assembly protein, and subsequently abolishes interaction with major capsid protein. Cleavages products are evicted from the capsid before or during DNA packaging. Protease that plays an essential role in virion assembly within the nucleus. Catalyzes the cleavage of the assembly protein after formation of the spherical procapsid. By that cleavage, the capsid matures and gains its icosahedral shape. The cleavage sites seem to include -Ala-Ser-, -Ala-Ala-, as well as Ala-Thr bonds. Assemblin and cleavages products are evicted from the capsid before or during DNA packaging. Functionally, plays a major role in capsid assembly. Acts as a scaffold protein by binding major capsid protein. Multimerizes in the nucleus such as major capsid protein forms the icosahedral T=16 capsid. Cleaved by assemblin after capsid completion. The cleavages products are evicted from the capsid before or during DNA packaging. The protein is Capsid scaffolding protein (UL80) of Homo sapiens (Human).